The sequence spans 862 residues: Glucans biosynthesis glucosyltransferase H (862 aa).

The tract at residues 1–25 (MELPATSGLNAQPGNAEGTTASTRP) is disordered. Polar residues predominate over residues 7–25 (SGLNAQPGNAEGTTASTRP). 5 helical membrane passes run 188–210 (RLTL…SSVL), 545–567 (GVMA…ALLA), 597–619 (ALFS…VLWA), 626–648 (GGAV…AAPV), and 708–730 (FLWW…VFSS).

This sequence belongs to the glycosyltransferase 2 family. OpgH subfamily.

Its subcellular location is the cell inner membrane. The protein operates within glycan metabolism; osmoregulated periplasmic glucan (OPG) biosynthesis. Involved in the biosynthesis of osmoregulated periplasmic glucans (OPGs). This chain is Glucans biosynthesis glucosyltransferase H, found in Ralstonia nicotianae (strain ATCC BAA-1114 / GMI1000) (Ralstonia solanacearum).